The following is a 291-amino-acid chain: Kidney mitochondrial carrier protein 1 (291 aa).

Ser2 carries the post-translational modification N-acetylserine. 3 Solcar repeats span residues 7 to 96 (KPFV…LKRL), 104 to 189 (ETLL…TKKH), and 198 to 289 (DTVA…LKKL). The next 6 membrane-spanning stretches (helical) occupy residues 9-26 (FVYG…TFPI), 71-89 (GIAP…KIGT), 106-124 (LLVN…SAIA), 164-183 (GVSL…LPVY), 204-224 (FLSS…VDVV), and 264-283 (GFWP…FLTY).

It belongs to the mitochondrial carrier (TC 2.A.29) family. As to quaternary structure, interacts with VDAC1. As to expression, present in kidney (at protein level). Expressed predominantly within the kidney cortex in the proximal and distal tubules and at lower levels in the testis and white adipose tissue.

It is found in the mitochondrion inner membrane. It carries out the reaction sulfite(in) + sulfate(out) = sulfite(out) + sulfate(in). The enzyme catalyses thiosulfate(in) + sulfate(out) = thiosulfate(out) + sulfate(in). It catalyses the reaction sulfate(out) + phosphate(in) = sulfate(in) + phosphate(out). The catalysed reaction is oxalate(in) + sulfate(out) = oxalate(out) + sulfate(in). It carries out the reaction malonate(in) + sulfate(out) = malonate(out) + sulfate(in). The enzyme catalyses maleate(in) + sulfate(out) = maleate(out) + sulfate(in). It catalyses the reaction (S)-malate(in) + sulfate(out) = (S)-malate(out) + sulfate(in). The catalysed reaction is (3S)-citramalate(in) + sulfate(out) = (3S)-citramalate(out) + sulfate(in). It carries out the reaction (3R)-citramalate(in) + sulfate(out) = (3R)-citramalate(out) + sulfate(in). The enzyme catalyses sulfate(out) + succinate(in) = sulfate(in) + succinate(out). It catalyses the reaction (S,S)-tartrate(in) + sulfate(out) = (S,S)-tartrate(out) + sulfate(in). The catalysed reaction is (2R,3R)-tartrate(in) + sulfate(out) = (2R,3R)-tartrate(out) + sulfate(in). It carries out the reaction D-aspartate(in) + sulfate(out) = D-aspartate(out) + sulfate(in). The enzyme catalyses L-aspartate(in) + sulfate(out) = L-aspartate(out) + sulfate(in). It catalyses the reaction sulfate(in) = sulfate(out). The catalysed reaction is phosphate(in) = phosphate(out). It carries out the reaction (S)-malate(out) = (S)-malate(in). Antiporter that transports inorganic anions (sulfate, sulfite, thiosulfate and phosphate) and, to a lesser extent, a variety of dicarboxylates (e.g. malonate, malate and citramalate) and, even more so, aspartate. The sulfate/sulfate exchange is much higher than the phosphate/phosphate and malate/malate exchanges. The transport affinities is higher for sulfate and thiosulfate than for any other substrate. May catalyze the export of sulfite and thiosulfate (the hydrogen sulfide degradation products) from the mitochondria, thereby modulating the level of the hydrogen sulfide. Also may mediate a very low unidirectional transport of sulfate, phosphate and (S)-malate. In Mus musculus (Mouse), this protein is Kidney mitochondrial carrier protein 1.